The sequence spans 561 residues: Septation ring formation regulator EzrA (561 aa).

Over 1-3 the chain is Extracellular; sequence MWI. Residues 4–22 traverse the membrane as a helical segment; the sequence is VVFSLLVLTVTFFVYGALR. At 23-561 the chain is on the cytoplasmic side; that stretch reads RKAFYKRVDK…VLEKVQHLAG (539 aa). Coiled-coil stretches lie at residues 98–130, 166–214, and 251–465; these read RFQKAKALLDTIEQRLHSIEEQLKIMVDDIQVL, AKVF…HLLK, and FAID…KLSD.

This sequence belongs to the EzrA family.

The protein localises to the cell membrane. Negative regulator of FtsZ ring formation; modulates the frequency and position of FtsZ ring formation. Inhibits FtsZ ring formation at polar sites. Interacts either with FtsZ or with one of its binding partners to promote depolymerization. The protein is Septation ring formation regulator EzrA of Halalkalibacterium halodurans (strain ATCC BAA-125 / DSM 18197 / FERM 7344 / JCM 9153 / C-125) (Bacillus halodurans).